Reading from the N-terminus, the 389-residue chain is Aspartyl protease UND (389 aa).

A signal peptide spans 1–19 (MKTTMNFVFLFFLPLLINA). The Peptidase A1 domain occupies 58 to 383 (FMAEIHFGSP…DLSAKTAYIN (326 aa)). The active site involves Asp76. A disulfide bond links Cys86 and Cys92. Residue Asn238 is glycosylated (N-linked (GlcNAc...) asparagine). Asp268 is a catalytic residue. The cysteines at positions 304 and 346 are disulfide-linked.

It belongs to the peptidase A1 family.

Functionally, probable aspartic protease activated by the transcription factor MYB80. May participate in the regulation of the timing of tapetal programmed cell death (PCD) which is critical for pollen development. The polypeptide is Aspartyl protease UND (Arabidopsis thaliana (Mouse-ear cress)).